The primary structure comprises 1152 residues: Receptor-type guanylate cyclase gcy-8 (1152 aa).

The first 21 residues, Met-1–Cys-21, serve as a signal peptide directing secretion. Residues Gln-22–Thr-506 are Extracellular-facing. 4 N-linked (GlcNAc...) asparagine glycosylation sites follow: Asn-31, Asn-55, Asn-385, and Asn-465. The helical transmembrane segment at Leu-507–Phe-527 threads the bilayer. The Cytoplasmic segment spans residues Ala-528–Arg-1152. One can recognise a Protein kinase domain in the interval Arg-567–Leu-857. ATP-binding positions include Met-573 to Ala-581 and Lys-593. Positions Gly-861–Leu-899 form a coiled coil. Residues Thr-927–Glu-1057 form the Guanylate cyclase domain. Mg(2+) contacts are provided by Asp-932, Ile-933, and Asp-976.

This sequence belongs to the adenylyl cyclase class-4/guanylyl cyclase family. In terms of tissue distribution, expressed bilaterally in AFD sensory neurons.

It is found in the cell membrane. Its subcellular location is the cell projection. The protein resides in the cilium. The enzyme catalyses GTP = 3',5'-cyclic GMP + diphosphate. Inhibited by chloride with an IC(50) of 60 mM. Guanylate cyclase involved in the production of the second messenger cGMP. Regulates thermotaxis responses in AFD sensory neurons. May regulate AFD neuronal activity such as calcium responses to temperature gradients. Maintains the microvilli receptive ending morphology of the AFD thermosensory neurons by regulating cGMP levels downstream of kcc-3. cGMP levels antagonize the actin cytoskeleton regulator wsp-1. The sequence is that of Receptor-type guanylate cyclase gcy-8 from Caenorhabditis elegans.